The following is a 306-amino-acid chain: Pantothenate kinase (306 aa).

91–98 lines the ATP pocket; that stretch reads GSVAVGKS.

The protein belongs to the prokaryotic pantothenate kinase family.

It localises to the cytoplasm. It carries out the reaction (R)-pantothenate + ATP = (R)-4'-phosphopantothenate + ADP + H(+). The protein operates within cofactor biosynthesis; coenzyme A biosynthesis; CoA from (R)-pantothenate: step 1/5. The chain is Pantothenate kinase from Streptococcus pyogenes serotype M5 (strain Manfredo).